The following is a 230-amino-acid chain: ATP synthase subunit a 1 (230 aa).

5 consecutive transmembrane segments (helical) span residues alanine 20–threonine 40, phenylalanine 78–phenylalanine 98, alanine 112–isoleucine 132, leucine 174–phenylalanine 194, and glycine 195–alanine 215.

The protein belongs to the ATPase A chain family. In terms of assembly, F-type ATPases have 2 components, CF(1) - the catalytic core - and CF(0) - the membrane proton channel. CF(1) has five subunits: alpha(3), beta(3), gamma(1), delta(1), epsilon(1). CF(0) has four main subunits: a, b, b' and c.

The protein localises to the cellular thylakoid membrane. Functionally, key component of the proton channel; it plays a direct role in the translocation of protons across the membrane. This is ATP synthase subunit a 1 from Crocosphaera subtropica (strain ATCC 51142 / BH68) (Cyanothece sp. (strain ATCC 51142)).